Reading from the N-terminus, the 231-residue chain is LexA repressor (231 aa).

The segment at 1–24 (MTDRKEHKMKPGRRPTEGMTPSQE) is disordered. A DNA-binding region (H-T-H motif) is located at residues 43–62 (VKEIAEALGMKTPSAHEQVQ). Residues Ser-146 and Lys-183 each act as for autocatalytic cleavage activity in the active site.

It belongs to the peptidase S24 family. Homodimer.

It catalyses the reaction Hydrolysis of Ala-|-Gly bond in repressor LexA.. Its function is as follows. Represses a number of genes involved in the response to DNA damage (SOS response), including recA and lexA. In the presence of single-stranded DNA, RecA interacts with LexA causing an autocatalytic cleavage which disrupts the DNA-binding part of LexA, leading to derepression of the SOS regulon and eventually DNA repair. The polypeptide is LexA repressor (Magnetococcus marinus (strain ATCC BAA-1437 / JCM 17883 / MC-1)).